The following is a 442-amino-acid chain: Glutamate-1-semialdehyde 2,1-aminomutase (442 aa).

K282 is subject to N6-(pyridoxal phosphate)lysine.

The protein belongs to the class-III pyridoxal-phosphate-dependent aminotransferase family. HemL subfamily. In terms of assembly, homodimer. Pyridoxal 5'-phosphate serves as cofactor.

It localises to the cytoplasm. The enzyme catalyses (S)-4-amino-5-oxopentanoate = 5-aminolevulinate. It functions in the pathway porphyrin-containing compound metabolism; protoporphyrin-IX biosynthesis; 5-aminolevulinate from L-glutamyl-tRNA(Glu): step 2/2. In Polaromonas sp. (strain JS666 / ATCC BAA-500), this protein is Glutamate-1-semialdehyde 2,1-aminomutase.